Consider the following 686-residue polypeptide: Methionine--tRNA ligase (686 aa).

A 'HIGH' region motif is present at residues 15-25 (PYANGSIHLGH). Positions 146, 149, 159, and 162 each coordinate Zn(2+). A 'KMSKS' region motif is present at residues 332 to 336 (KMSKS). Lysine 335 contacts ATP. Positions 550 to 571 (AAAEAAAKEKAEAEKEQASQTE) are disordered. The 102-residue stretch at 585–686 (AFSAVDMRIA…EGAQPGMRVM (102 aa)) folds into the tRNA-binding domain.

The protein belongs to the class-I aminoacyl-tRNA synthetase family. MetG type 1 subfamily. Homodimer. Requires Zn(2+) as cofactor.

Its subcellular location is the cytoplasm. It catalyses the reaction tRNA(Met) + L-methionine + ATP = L-methionyl-tRNA(Met) + AMP + diphosphate. Its function is as follows. Is required not only for elongation of protein synthesis but also for the initiation of all mRNA translation through initiator tRNA(fMet) aminoacylation. The polypeptide is Methionine--tRNA ligase (Vibrio atlanticus (strain LGP32) (Vibrio splendidus (strain Mel32))).